The chain runs to 202 residues: Putative 3-methyladenine DNA glycosylase (202 aa).

It belongs to the DNA glycosylase MPG family.

This is Putative 3-methyladenine DNA glycosylase from Staphylococcus haemolyticus (strain JCSC1435).